Here is an 827-residue protein sequence, read N- to C-terminus: Striatin homolog (827 aa).

A coiled-coil region spans residues 37 to 109; that stretch reads RAHWISEKAE…VEEEEEEDDK (73 aa). 4 disordered regions span residues 99 to 123, 181 to 270, 311 to 362, and 400 to 459; these read KVEE…SKDN, KDIN…QLQS, SSVS…DEQS, and EEGN…SELM. Basic and acidic residues predominate over residues 109 to 123; that stretch reads KIPKNREPPKKSKDN. Composition is skewed to low complexity over residues 184–270 and 311–334; these read NNNN…QLQS and SSVS…TSKQ. Polar residues predominate over residues 337 to 346; the sequence is EDPNNVTISK. 3 stretches are compositionally biased toward low complexity: residues 347 to 356, 416 to 432, and 439 to 453; these read QQQQEQQQQQ, TPTT…STGS, and SSSS…NSNT. WD repeat units follow at residues 495–534, 548–593, 610–649, 709–748, 751–790, and 797–827; these read SHFD…PTKK, GHTG…IDSY, GHQD…QLYT, NNNS…VVHS, AHSN…CIQD, and KYDE…RILN.

It belongs to the WD repeat striatin family. In terms of assembly, part of the core of STRIPAK complexes.

It is found in the cytoplasm. The protein localises to the membrane. Its function is as follows. Calmodulin-binding scaffolding protein which is the center of the striatin-interacting phosphatase and kinase (STRIPAK) complexes. STRIPAK complexes have critical roles in protein (de)phosphorylation and are regulators of multiple signaling pathways including Hippo, MAPK, nuclear receptor and cytoskeleton remodeling. Different types of STRIPAK complexes are involved in a variety of biological processes such as cell growth, differentiation, apoptosis, metabolism and immune regulation. This is Striatin homolog (strn) from Dictyostelium discoideum (Social amoeba).